The chain runs to 1119 residues: Transcriptional repressor NF-X1 homolog (1119 aa).

Residues 1 to 214 (MADTEGTSSS…EPLTEEETKI (214 aa)) are disordered. Residues 7 to 17 (TSSSIPTSTNS) show a composition bias toward low complexity. Residues 18-29 (SRHRASRGRGGR) show a composition bias toward basic residues. Residues 84–98 (ANFTFNPNAATFNPA) are compositionally biased toward low complexity. Residues 113–128 (GASTHSNQNSRQQEPS) are compositionally biased toward polar residues. The segment covering 143 to 154 (RQLEIQEQRGDS) has biased composition (basic and acidic residues). Low complexity predominate over residues 157-167 (QNQSRQNNRNQ). Polar residues predominate over residues 174–193 (ANQQNKSVQNPSRNPGNSRR). The span at 198 to 214 (RRREQKEEPLTEEETKI) shows a compositional bias: basic and acidic residues. An RING-type; degenerate zinc finger spans residues 235–287 (CAICYTRITTRQGVWSCKTCYHIFHISTGCITDWARSSRDKEGANTWRCPTCQ). NF-X1-type zinc fingers lie at residues 330 to 348 (CPHP…ECKL), 383 to 402 (CGQH…ECTV), 439 to 458 (CGIH…ECET), 500 to 523 (CGTP…PCNL), 565 to 584 (CGMH…FCLQ), 592 to 611 (CGIH…PCLQ), 649 to 668 (CDHS…PCTQ), 703 to 726 (CGVH…KCTK), and 735 to 756 (CEHP…PCKA). Residues 867–937 (IDFVKSVEKI…KRSIVLTAVR (71 aa)) enclose the R3H domain. Disordered regions lie at residues 1024–1047 (VDSD…PKDW) and 1078–1119 (AAKK…ELLE). The span at 1032–1041 (NVPTTSNLVS) shows a compositional bias: polar residues. Residues 1086–1097 (PTWEDQCDEDAP) show a composition bias toward acidic residues.

The protein belongs to the NFX1 family.

Its subcellular location is the nucleus. In terms of biological role, may play a role in transcription regulation. This is Transcriptional repressor NF-X1 homolog (nfx-1) from Caenorhabditis elegans.